The following is a 255-amino-acid chain: uncharacterized protein (255 aa).

This is an uncharacterized protein from Methanocaldococcus jannaschii (strain ATCC 43067 / DSM 2661 / JAL-1 / JCM 10045 / NBRC 100440) (Methanococcus jannaschii).